A 103-amino-acid polypeptide reads, in one-letter code: Large ribosomal subunit protein bL21 (103 aa).

The protein belongs to the bacterial ribosomal protein bL21 family. In terms of assembly, part of the 50S ribosomal subunit. Contacts protein L20.

In terms of biological role, this protein binds to 23S rRNA in the presence of protein L20. In Alkaliphilus oremlandii (strain OhILAs) (Clostridium oremlandii (strain OhILAs)), this protein is Large ribosomal subunit protein bL21.